The sequence spans 345 residues: Nuclear distribution protein nudE-like 1 (345 aa).

Residues 28-190 (QSFQEARDEL…LAVRERQQEV (163 aa)) are a coiled coil. Residues 56 to 166 (VQAEQRNRDL…LDEKESLLVS (111 aa)) form a self-association region. The segment at 64 to 189 (DLQADNQRLK…ELAVRERQQE (126 aa)) is interaction with KATNB1. Positions 114–133 (YVRELEQANDDLERAKRATI) are required for interaction with PAFAH1B1. Residues 175–345 (RDLRQELAVR…SAPGMLPLSV (171 aa)) are interaction with CENPF. The interaction with YWHAE stretch occupies residues 189–256 (EVTRKSAPSS…SARISALNIV (68 aa)). Residues 191-345 (TRKSAPSSPT…SAPGMLPLSV (155 aa)) form an interaction with NEFL region. The segment at 195-256 (APSSPTLDCE…SARISALNIV (62 aa)) is interaction with KATNA1. Ser215 is subject to Phosphoserine. Phosphothreonine; by CDK1 and MAPK1 is present on Thr219. At Ser231 the chain carries Phosphoserine. The segment at 241–280 (TSPLTPSARISALNIVGDLLRKVGALESKLAACRNFAKDQ) is interaction with DISC1. The residue at position 242 (Ser242) is a Phosphoserine; by CDK1. Phosphothreonine; by CDK1 and MAPK1 is present on Thr245. Residues 256–291 (VGDLLRKVGALESKLAACRNFAKDQASRKSYISGNV) are required for localization to the centrosome and interaction with dynein, dynactin, tubulin gamma, PCM1 and PCNT. A lipid anchor (S-palmitoyl cysteine; by ZDHHC2, ZDHHC3 and ZDHHC7) is attached at Cys273. The tract at residues 315-345 (GAVNGFDPAPPPPGLGSSRPSSAPGMLPLSV) is disordered. Low complexity predominate over residues 329-339 (LGSSRPSSAPG). At Ser344 the chain carries Phosphoserine.

It belongs to the nudE family. In terms of assembly, interacts with PLEKHM1 (via N- and C-terminus). Interacts with YWHAE. Interacts directly with NEFL and indirectly with NEFH. Interacts with microtubules. Self-associates. Interacts with DISC1, dynein, dynactin, tubulin gamma, KATNA1, KATNB1, PAFAH1B1, PCM1 and PCNT. Interacts (via C-terminus) with CENPF. Interacts with ZNF365. Interacts with GTP-bound RAB9A; the interaction may lead to RAB9A-dynein motor tethering. Phosphorylated in mitosis. Can be phosphorylated by CDK1, CDK5 and MAPK1. Phosphorylation by CDK5 promotes interaction with KATNA1 and YWHAE. Post-translationally, palmitoylation at Cys-273 reduces affinity for dynein. As to expression, expressed in brain, heart, kidney, liver, lung, pancreas, placenta and skeletal muscle.

Its subcellular location is the cytoplasm. The protein resides in the cytoskeleton. It localises to the microtubule organizing center. The protein localises to the centrosome. It is found in the chromosome. Its subcellular location is the centromere. The protein resides in the kinetochore. It localises to the spindle. Functionally, required for organization of the cellular microtubule array and microtubule anchoring at the centrosome. May regulate microtubule organization at least in part by targeting the microtubule severing protein KATNA1 to the centrosome. Also positively regulates the activity of the minus-end directed microtubule motor protein dynein. May enhance dynein-mediated microtubule sliding by targeting dynein to the microtubule plus ends. Required for several dynein- and microtubule-dependent processes such as the maintenance of Golgi integrity, the centripetal motion of secretory vesicles and the coupling of the nucleus and centrosome. Also required during brain development for the migration of newly formed neurons from the ventricular/subventricular zone toward the cortical plate. Plays a role, together with DISC1, in the regulation of neurite outgrowth. Required for mitosis in some cell types but appears to be dispensible for mitosis in cortical neuronal progenitors, which instead requires NDE1. Facilitates the polymerization of neurofilaments from the individual subunits NEFH and NEFL. Positively regulates lysosome peripheral distribution and ruffled border formation in osteoclasts. Plays a role, together with DISC1, in the regulation of neurite outgrowth. May act as a RAB9A/B effector that tethers RAB9-associated late endosomes to the dynein motor for their retrograde transport to the trans-Golgi network. The sequence is that of Nuclear distribution protein nudE-like 1 (NDEL1) from Homo sapiens (Human).